A 625-amino-acid chain; its full sequence is MFFDDEFDVIVVGGGHAGTEAALAAARTGARTLLLTQNVETLGQMSCNPAIGGIGKGHLVKEIDAMGGLMARAADRAGIQFRILNASKGPAVRATRAQADRSLYRKAVREGLSAQENLSLFQQTVVDLIVEGRRAAGVVTQMGLKFRSRCVVLTVGTFLAGRIHIGLENYDGGRAGDPPATDLARRLRDLGFKVARLKTGTPPRIDRRSVDFSRMAEQPGDDPTPVFSFLGTREEHPPQVSCYITRTNERTHELIRAGLDRSPMFTGVIEGIGPRYCPSIEDKVVRFAERDSHQIFVEPEGLDSLEIYPNGISTSLPFDVQLAVVRSIQGFEDARITRPGYAIEYDFFDPRDLRHSLETRHMENLFFAGQINGTTGYEEAAAQGLLAGLNAARKARDLEPWWPGRDEAYLGVLVDDLITRGTSEPYRMFTSRAEYRLVLREDNADLRLTETGRALGLVDDARWSAFEAKREAIETLGARLAARRIRPDSSQAESWNALTEIPLQREASLLELLRRPDVGLEHIAGHAPDLFEGMDRAVREQVEIAAKYTGYIERQQAEIERVRRYEAWQLPDSMDYGKVIGLSSEVREKLGRVRPATVGQAARIPGITPAAISLLLVHLRRTGAA.

An FAD-binding site is contributed by 13–18 (GGGHAG). 273-287 (GPRYCPSIEDKVVRF) contacts NAD(+).

This sequence belongs to the MnmG family. Homodimer. Heterotetramer of two MnmE and two MnmG subunits. FAD is required as a cofactor.

It localises to the cytoplasm. Functionally, NAD-binding protein involved in the addition of a carboxymethylaminomethyl (cmnm) group at the wobble position (U34) of certain tRNAs, forming tRNA-cmnm(5)s(2)U34. The sequence is that of tRNA uridine 5-carboxymethylaminomethyl modification enzyme MnmG from Methylococcus capsulatus (strain ATCC 33009 / NCIMB 11132 / Bath).